We begin with the raw amino-acid sequence, 119 residues long: Beta-2-microglobulin (119 aa).

Positions 1–20 (MSPSVALAVLALLSLSGLEA) are cleaved as a signal peptide. The 90-residue stretch at 25–114 (PKIQVYSRHP…VTLSGPRTVK (90 aa)) folds into the Ig-like C1-type domain. The cysteines at positions 45 and 100 are disulfide-linked.

This sequence belongs to the beta-2-microglobulin family. Heterodimer of an alpha chain and a beta chain. Beta-2-microglobulin is the beta-chain of major histocompatibility complex class I molecules.

The protein resides in the secreted. Component of the class I major histocompatibility complex (MHC). Involved in the presentation of peptide antigens to the immune system. This chain is Beta-2-microglobulin (B2M), found in Macaca fascicularis (Crab-eating macaque).